A 126-amino-acid chain; its full sequence is Putative lipoprotein LprD (126 aa).

The N-terminal stretch at 1–21 (MSTTRRRRPALIALVIIATCG) is a signal peptide. A lipid anchor (N-palmitoyl cysteine) is attached at Cys22. Cys22 is lipidated: S-diacylglycerol cysteine. The chain crosses the membrane as a helical span at residues 40 to 60 (FQNLGYALQWPLFAWFCVYAY). The tract at residues 70–101 (PPQPPTGGAAAEIPAGLLPERPKPAQQPPDDP) is disordered.

To M.leprae ML1177.

The protein localises to the cell membrane. The polypeptide is Putative lipoprotein LprD (lprD) (Mycobacterium tuberculosis (strain CDC 1551 / Oshkosh)).